The following is a 117-amino-acid chain: Large ribosomal subunit protein eL8 (117 aa).

The protein belongs to the eukaryotic ribosomal protein eL8 family. As to quaternary structure, part of the 50S ribosomal subunit. Probably part of the RNase P complex.

The protein resides in the cytoplasm. In terms of biological role, multifunctional RNA-binding protein that recognizes the K-turn motif in ribosomal RNA, the RNA component of RNase P, box H/ACA, box C/D and box C'/D' sRNAs. The protein is Large ribosomal subunit protein eL8 of Methanocaldococcus jannaschii (strain ATCC 43067 / DSM 2661 / JAL-1 / JCM 10045 / NBRC 100440) (Methanococcus jannaschii).